The following is a 201-amino-acid chain: Protein GrpE (201 aa).

The span at 1-11 shows a compositional bias: polar residues; sequence MTDSTNNQGTS. The disordered stretch occupies residues 1 to 40; sequence MTDSTNNQGTSGRPDDDHTTEEVASVFNDPGAQAPAGEPD.

This sequence belongs to the GrpE family. As to quaternary structure, homodimer.

It localises to the cytoplasm. Functionally, participates actively in the response to hyperosmotic and heat shock by preventing the aggregation of stress-denatured proteins, in association with DnaK and GrpE. It is the nucleotide exchange factor for DnaK and may function as a thermosensor. Unfolded proteins bind initially to DnaJ; upon interaction with the DnaJ-bound protein, DnaK hydrolyzes its bound ATP, resulting in the formation of a stable complex. GrpE releases ADP from DnaK; ATP binding to DnaK triggers the release of the substrate protein, thus completing the reaction cycle. Several rounds of ATP-dependent interactions between DnaJ, DnaK and GrpE are required for fully efficient folding. This Beijerinckia indica subsp. indica (strain ATCC 9039 / DSM 1715 / NCIMB 8712) protein is Protein GrpE.